The chain runs to 322 residues: MVLDMASHLYTNPPQNLHFISSSSSLKPHLCLSFKRINPKHKSSSSSVFVPYASQSSIAITSKERWSLNGMSALVTGGTRGIGRAIVEELAGLGAEVHTCARNEYELENCLSDWNRSGFRVAGSVCDVSDRSQREALMETVSSVFEGKLHILVNNVGTNIRKPMVEFTAGEFSTLMSTNFESVFHLCQLAYPLLRESKAGSVVFISSVSGFVSLKNMSVQSSTKGAINQLTRSLACEWAKDNIRINAVAPWYIKTSMVEQVLSNKEYLEEVYSVTPLGRLGEPREVSSAVAFLCLPASSYITGQILCVDGGMSINGFFPRHD.

The N-terminal 61 residues, 1–61, are a transit peptide targeting the chloroplast; sequence MVLDMASHLY…YASQSSIAIT (61 aa). Residue 74 to 98 participates in NADP(+) binding; that stretch reads LVTGGTRGIGRAIVEELAGLGAEVH. Position 207 (Ser-207) interacts with substrate.

Belongs to the short-chain dehydrogenases/reductases (SDR) family. SDR65C subfamily.

It is found in the plastid. Its subcellular location is the chloroplast. The chain is Tropinone reductase homolog At2g29260, chloroplastic from Arabidopsis thaliana (Mouse-ear cress).